We begin with the raw amino-acid sequence, 347 residues long: Ribosomal RNA small subunit methyltransferase C (347 aa).

It belongs to the methyltransferase superfamily. RsmC family. In terms of assembly, monomer.

It is found in the cytoplasm. It carries out the reaction guanosine(1207) in 16S rRNA + S-adenosyl-L-methionine = N(2)-methylguanosine(1207) in 16S rRNA + S-adenosyl-L-homocysteine + H(+). In terms of biological role, specifically methylates the guanine in position 1207 of 16S rRNA in the 30S particle. This is Ribosomal RNA small subunit methyltransferase C from Yersinia enterocolitica serotype O:8 / biotype 1B (strain NCTC 13174 / 8081).